A 296-amino-acid chain; its full sequence is GTPase Era (296 aa).

Residues 3–170 (KSGFVTIVGR…KELMFKYIPE (168 aa)) form the Era-type G domain. The interval 11 to 18 (GRPNVGKS) is G1. Position 11–18 (11–18 (GRPNVGKS)) interacts with GTP. The tract at residues 37–41 (QTTRN) is G2. A G3 region spans residues 58-61 (DTPG). Residues 58 to 62 (DTPGI) and 120 to 123 (NKID) contribute to the GTP site. Positions 120 to 123 (NKID) are G4. The G5 stretch occupies residues 149-151 (ISA). The KH type-2 domain occupies 201 to 278 (LSEEVPHGIA…YIRLWVKVKE (78 aa)).

Belongs to the TRAFAC class TrmE-Era-EngA-EngB-Septin-like GTPase superfamily. Era GTPase family. In terms of assembly, monomer.

It is found in the cytoplasm. The protein localises to the cell membrane. Its function is as follows. An essential GTPase that binds both GDP and GTP, with rapid nucleotide exchange. Plays a role in 16S rRNA processing and 30S ribosomal subunit biogenesis and possibly also in cell cycle regulation and energy metabolism. This chain is GTPase Era, found in Clostridium botulinum (strain Kyoto / Type A2).